Reading from the N-terminus, the 271-residue chain is 2,3,4,5-tetrahydropyridine-2,6-dicarboxylate N-succinyltransferase (271 aa).

Positions 102 and 139 each coordinate substrate.

Belongs to the transferase hexapeptide repeat family. As to quaternary structure, homotrimer.

The protein localises to the cytoplasm. It carries out the reaction (S)-2,3,4,5-tetrahydrodipicolinate + succinyl-CoA + H2O = (S)-2-succinylamino-6-oxoheptanedioate + CoA. It functions in the pathway amino-acid biosynthesis; L-lysine biosynthesis via DAP pathway; LL-2,6-diaminopimelate from (S)-tetrahydrodipicolinate (succinylase route): step 1/3. This chain is 2,3,4,5-tetrahydropyridine-2,6-dicarboxylate N-succinyltransferase, found in Coxiella burnetii (strain RSA 331 / Henzerling II).